The sequence spans 186 residues: GTP cyclohydrolase 1 2 (186 aa).

Belongs to the GTP cyclohydrolase I family. In terms of assembly, homomer.

It catalyses the reaction GTP + H2O = 7,8-dihydroneopterin 3'-triphosphate + formate + H(+). It functions in the pathway cofactor biosynthesis; 7,8-dihydroneopterin triphosphate biosynthesis; 7,8-dihydroneopterin triphosphate from GTP: step 1/1. The polypeptide is GTP cyclohydrolase 1 2 (Pseudomonas putida (strain ATCC 47054 / DSM 6125 / CFBP 8728 / NCIMB 11950 / KT2440)).